We begin with the raw amino-acid sequence, 665 residues long: Syntabulin (665 aa).

Positions 1 to 22 (MGPLRESKKEQRVQHQEKEISR) are enriched in basic and acidic residues. The tract at residues 1–271 (MGPLRESKKE…GVKPPNPEQY (271 aa)) is disordered. Residues 2 to 421 (GPLRESKKEQ…DKLPDGLSLE (420 aa)) form a sufficient for interaction with KIF5B region. Residues 35–52 (PQQQQQQQNKVSPASESP) are compositionally biased toward low complexity. Ser-54 bears the Phosphoserine mark. Residues 61–77 (FNPSSSGRSARTISSNS) show a composition bias toward low complexity. Polar residues predominate over residues 85–101 (CPSSQSVSPVKTPSDTG). The residue at position 111 (Ser-111) is a Phosphoserine. Residues 141-162 (GGIIKPGSEADFSSSSSTGSIS) show a composition bias toward low complexity. The segment covering 168–180 (MSTTGNKRASFSR) has biased composition (polar residues). Residues 225–245 (SYAPSSPSSSNSGSYKGSDCS) are compositionally biased toward low complexity. Residues 275–357 (LQQKEVTVRH…MRSSLADKDK (83 aa)) are a coiled coil. Positions 314 to 421 (REDWIEEECH…DKLPDGLSLE (108 aa)) are sufficient for interaction with STX1A. Ser-400 and Ser-557 each carry phosphoserine. A helical transmembrane segment spans residues 609 to 629 (FLVDLLAVAAPVVPTVLWAFS).

In terms of assembly, interacts with STX1A and KIF5B.

Its subcellular location is the golgi apparatus membrane. Functionally, part of a kinesin motor-adapter complex that is critical for the anterograde axonal transport of active zone components and contributes to activity-dependent presynaptic assembly during neuronal development. This Mus musculus (Mouse) protein is Syntabulin (Sybu).